The chain runs to 880 residues: DNA mismatch repair protein MutS (880 aa).

605-612 (GPNMSGKS) lines the ATP pocket. Positions 790–829 (QETAAVPSRGVEPPAPVIEPTPAKEQTPVKEQTTPLVEES) are disordered. Over residues 818–829 (VKEQTTPLVEES) the composition is skewed to polar residues.

This sequence belongs to the DNA mismatch repair MutS family.

In terms of biological role, this protein is involved in the repair of mismatches in DNA. It is possible that it carries out the mismatch recognition step. This protein has a weak ATPase activity. The protein is DNA mismatch repair protein MutS of Limosilactobacillus fermentum (strain NBRC 3956 / LMG 18251) (Lactobacillus fermentum).